The chain runs to 519 residues: MAGGAMVQTVGGKTYPGKMTAFVFFTCLVASSGGLIFGYDIGISGGVTSMDSFLSEFFPSVYAQAKASKDTNQYCKFDSQLLTLFTSSLYLAALATSFVAAWVTRVFGRKWSMFCGGVTFLAGSALNGAATDVMMLILGRILLGIGVGFANQSVPLYLSEMAPANLRGMLNIGFQLMTTIGILSANLINYATSSIEGGWGWRIGLGLAGVPALIITLGALVLPDTPNSLIARGYAGDAKRVLVKIRGTDDVHDEYDDMVAASEEAASIEHPWRNILHRKYRPQLTIAILIPCFQQLTGINVIMFYAPVLFLTIGFAGDASLMSAVITGLVNMFATVVSIISVDRLGRRVLFLQGGTQMFISQVVVGTLIALQFGVAGVGEMSRSYAILLVLFICMYVAGFAWSWGPLGWLVPSEVFALEIRSAGQSIAVCVNMMLTFVIGQAFLTMLCHLKFGLFYFFAGWMLVMTTFVALFLPETKGVPIEEMNHVWSRHWFWGSYVTAHDVAGAGAGGGGNRRSHNV.

Residues 1-18 are Cytoplasmic-facing; it reads MAGGAMVQTVGGKTYPGK. A helical membrane pass occupies residues 19–39; sequence MTAFVFFTCLVASSGGLIFGY. Residues 40 to 80 lie on the Extracellular side of the membrane; that stretch reads DIGISGGVTSMDSFLSEFFPSVYAQAKASKDTNQYCKFDSQ. Residues 81–101 traverse the membrane as a helical segment; it reads LLTLFTSSLYLAALATSFVAA. The Cytoplasmic segment spans residues 102 to 110; the sequence is WVTRVFGRK. The chain crosses the membrane as a helical span at residues 111–127; that stretch reads WSMFCGGVTFLAGSALN. Position 128 (Gly-128) is a topological domain, extracellular. Residues 129–149 traverse the membrane as a helical segment; the sequence is AATDVMMLILGRILLGIGVGF. Residues 150–167 are Cytoplasmic-facing; that stretch reads ANQSVPLYLSEMAPANLR. Residues 168–188 form a helical membrane-spanning segment; the sequence is GMLNIGFQLMTTIGILSANLI. Residues 189 to 202 are Extracellular-facing; it reads NYATSSIEGGWGWR. Residues 203 to 223 traverse the membrane as a helical segment; it reads IGLGLAGVPALIITLGALVLP. The Cytoplasmic portion of the chain corresponds to 224–295; the sequence is DTPNSLIARG…IAILIPCFQQ (72 aa). The helical transmembrane segment at 296–316 threads the bilayer; sequence LTGINVIMFYAPVLFLTIGFA. Over 317 to 321 the chain is Extracellular; that stretch reads GDASL. Residues 322 to 342 traverse the membrane as a helical segment; that stretch reads MSAVITGLVNMFATVVSIISV. Over 343–357 the chain is Cytoplasmic; that stretch reads DRLGRRVLFLQGGTQ. A helical membrane pass occupies residues 358-378; it reads MFISQVVVGTLIALQFGVAGV. Residues 379–386 lie on the Extracellular side of the membrane; the sequence is GEMSRSYA. The chain crosses the membrane as a helical span at residues 387-407; it reads ILLVLFICMYVAGFAWSWGPL. Residues 408 to 426 lie on the Cytoplasmic side of the membrane; that stretch reads GWLVPSEVFALEIRSAGQS. A helical membrane pass occupies residues 427–447; that stretch reads IAVCVNMMLTFVIGQAFLTML. The Extracellular segment spans residues 448-451; the sequence is CHLK. The helical transmembrane segment at 452 to 472 threads the bilayer; that stretch reads FGLFYFFAGWMLVMTTFVALF. Residues 473–519 are Cytoplasmic-facing; the sequence is LPETKGVPIEEMNHVWSRHWFWGSYVTAHDVAGAGAGGGGNRRSHNV.

Belongs to the major facilitator superfamily. Sugar transporter (TC 2.A.1.1) family. Expressed in panicles before heading. Expressed in flowers before pollination.

The protein resides in the membrane. Functionally, mediates active uptake of hexoses by sugar:proton symport. Can transport glucose, xylose and 3-O-methylglucose. May play a role at the early stage of seed development. The sequence is that of Sugar transport protein MST5 from Oryza sativa subsp. japonica (Rice).